A 93-amino-acid polypeptide reads, in one-letter code: Large ribosomal subunit protein uL23cz/uL23cy (93 aa).

It belongs to the universal ribosomal protein uL23 family. Part of the 50S ribosomal subunit.

The protein resides in the plastid. The protein localises to the chloroplast. Binds to 23S rRNA. This chain is Large ribosomal subunit protein uL23cz/uL23cy (rpl23-A), found in Phaseolus angularis (Azuki bean).